A 429-amino-acid polypeptide reads, in one-letter code: Histidine--tRNA ligase (429 aa).

It belongs to the class-II aminoacyl-tRNA synthetase family. In terms of assembly, homodimer.

Its subcellular location is the cytoplasm. The catalysed reaction is tRNA(His) + L-histidine + ATP = L-histidyl-tRNA(His) + AMP + diphosphate + H(+). This Streptococcus mutans serotype c (strain ATCC 700610 / UA159) protein is Histidine--tRNA ligase.